The sequence spans 467 residues: Chromosomal replication initiator protein DnaA (467 aa).

The segment at 1–90 (MSLSLWQQCL…KPVTQTPQAA (90 aa)) is domain I, interacts with DnaA modulators. The interval 91-130 (VTSNVAAPALVAQTQPQRAAPSTRSGWDNVPAPAEPTYRS) is domain II. Residues 131 to 347 (NVNVKHTFDN…GALNRVIANA (217 aa)) form a domain III, AAA+ region region. ATP is bound by residues G175, G177, K178, and T179. A domain IV, binds dsDNA region spans residues 348–467 (NFTGRAITID…FSNLIRTLSS (120 aa)).

Belongs to the DnaA family. In terms of assembly, oligomerizes as a right-handed, spiral filament on DNA at oriC.

Its subcellular location is the cytoplasm. Plays an essential role in the initiation and regulation of chromosomal replication. ATP-DnaA binds to the origin of replication (oriC) to initiate formation of the DNA replication initiation complex once per cell cycle. Binds the DnaA box (a 9 base pair repeat at the origin) and separates the double-stranded (ds)DNA. Forms a right-handed helical filament on oriC DNA; dsDNA binds to the exterior of the filament while single-stranded (ss)DNA is stabiized in the filament's interior. The ATP-DnaA-oriC complex binds and stabilizes one strand of the AT-rich DNA unwinding element (DUE), permitting loading of DNA polymerase. After initiation quickly degrades to an ADP-DnaA complex that is not apt for DNA replication. Binds acidic phospholipids. The chain is Chromosomal replication initiator protein DnaA from Shigella dysenteriae serotype 1 (strain Sd197).